Consider the following 380-residue polypeptide: Beta-1,3-N-acetylglucosaminyltransferase lunatic fringe (380 aa).

At 1-8 (MLKRCGRR) the chain is on the cytoplasmic side. Residues 9–29 (LLLALAGALLACLLVLTADPP) form a helical; Signal-anchor for type II membrane protein membrane-spanning segment. Topologically, residues 30–380 (PPPVPAERGR…TSWCPRSAIF (351 aa)) are lumenal. The disordered stretch occupies residues 85-110 (SRRDVGPPPGGAPRPADGPPRPLAEP). Positions 90–107 (GPPPGGAPRPADGPPRPL) are enriched in pro residues. Arg130 is a binding site for substrate. N-linked (GlcNAc...) asparagine glycosylation occurs at Asn168. Disulfide bonds link Cys169/Cys180 and Cys198/Cys261. Asp202 is a binding site for substrate. Residue Asp203 participates in Mn(2+) binding. Residue Asp291 is part of the active site. His315 is a Mn(2+) binding site. Cysteines 365 and 374 form a disulfide.

The protein belongs to the glycosyltransferase 31 family. Mn(2+) is required as a cofactor. Co(2+) serves as cofactor. A soluble form may be derived from the membrane form by proteolytic processing.

It localises to the golgi apparatus. Its subcellular location is the golgi apparatus membrane. The enzyme catalyses 3-O-(alpha-L-fucosyl)-L-threonyl-[EGF-like domain protein] + UDP-N-acetyl-alpha-D-glucosamine = 3-O-(N-acetyl-beta-D-glucosaminyl-(1-&gt;3)-alpha-L-fucosyl)-L-threonyl-[EGF-like domain protein] + UDP + H(+). The catalysed reaction is 3-O-(alpha-L-fucosyl)-L-seryl-[EGF-like domain protein] + UDP-N-acetyl-alpha-D-glucosamine = 3-O-(N-acetyl-beta-D-glucosaminyl-(1-&gt;3)-alpha-L-fucosyl)-L-seryl-[EGF-like domain protein] + UDP + H(+). In terms of biological role, glycosyltransferase that initiates the elongation of O-linked fucose residues attached to EGF-like repeats in the extracellular domain of Notch molecules. Modulates NOTCH1 activity by modifying O-fucose residues at specific EGF-like domains resulting in inhibition of NOTCH1 activation by JAG1 and enhancement of NOTCH1 activation by DLL1 via an increase in its binding to DLL1. Decreases the binding of JAG1 to NOTCH2 but not that of DLL1. Essential mediator of somite segmentation and patterning. This chain is Beta-1,3-N-acetylglucosaminyltransferase lunatic fringe (LFNG), found in Bos taurus (Bovine).